The following is a 435-amino-acid chain: GTPase Obg (435 aa).

An Obg domain is found at 6–164 (ADFVDRVKIF…RWLELELKIL (159 aa)). In terms of domain architecture, OBG-type G spans 165-335 (ADVGLVGYPN…LVSKLASIVR (171 aa)). Residues 171–178 (GYPNVGKS), 196–200 (FTTLI), 217–220 (DIPG), 287–290 (NKID), and 316–318 (SAV) each bind GTP. Mg(2+) is bound by residues Ser178 and Thr198. In terms of domain architecture, OCT spans 357-435 (RRLPEKFHLE…IGDFEFEYRE (79 aa)).

It belongs to the TRAFAC class OBG-HflX-like GTPase superfamily. OBG GTPase family. Monomer. Mg(2+) serves as cofactor.

It localises to the cytoplasm. Its function is as follows. An essential GTPase which binds GTP, GDP and possibly (p)ppGpp with moderate affinity, with high nucleotide exchange rates and a fairly low GTP hydrolysis rate. Plays a role in control of the cell cycle, stress response, ribosome biogenesis and in those bacteria that undergo differentiation, in morphogenesis control. This is GTPase Obg from Thermotoga petrophila (strain ATCC BAA-488 / DSM 13995 / JCM 10881 / RKU-1).